A 195-amino-acid chain; its full sequence is Protein LIGHT-DEPENDENT SHORT HYPOCOTYLS 4 (195 aa).

Over residues Thr-28–Ser-38 the composition is skewed to low complexity. Disordered stretches follow at residues Thr-28 to Asn-51 and Ser-162 to Asn-195. The ALOG domain occupies Arg-48 to Lys-175. The Nuclear localization signal signature appears at Lys-173 to Lys-177.

The protein belongs to the plant homeotic and developmental regulators ALOG protein family. As to expression, induced by NAC054/CUC1 and NAC098/CUC2 in shoot organ boundary cells.

The protein localises to the nucleus. Functionally, probable transcription regulator that acts as a developmental regulator by promoting cell growth in response to light. May suppress organ differentiation in the boundary region. The polypeptide is Protein LIGHT-DEPENDENT SHORT HYPOCOTYLS 4 (LSH4) (Arabidopsis thaliana (Mouse-ear cress)).